The sequence spans 222 residues: Ribonuclease 3 (222 aa).

One can recognise an RNase III domain in the interval 3–125 (SQSVAKKLNH…LFGAIYLDAG (123 aa)). E38 contributes to the Mg(2+) binding site. The active site involves D42. The Mg(2+) site is built by D111 and E114. Residue E114 is part of the active site. The 71-residue stretch at 152–222 (DAKTRLQEWL…AEKALKELLA (71 aa)) folds into the DRBM domain.

It belongs to the ribonuclease III family. In terms of assembly, homodimer. It depends on Mg(2+) as a cofactor.

It localises to the cytoplasm. The enzyme catalyses Endonucleolytic cleavage to 5'-phosphomonoester.. Its function is as follows. Digests double-stranded RNA. Involved in the processing of primary rRNA transcript to yield the immediate precursors to the large and small rRNAs (23S and 16S). Processes some mRNAs, and tRNAs when they are encoded in the rRNA operon. Processes pre-crRNA and tracrRNA of type II CRISPR loci if present in the organism. The polypeptide is Ribonuclease 3 (Dechloromonas aromatica (strain RCB)).